We begin with the raw amino-acid sequence, 426 residues long: Histidine--tRNA ligase (426 aa).

This sequence belongs to the class-II aminoacyl-tRNA synthetase family. Homodimer.

It localises to the cytoplasm. The catalysed reaction is tRNA(His) + L-histidine + ATP = L-histidyl-tRNA(His) + AMP + diphosphate + H(+). In Streptococcus agalactiae serotype III (strain NEM316), this protein is Histidine--tRNA ligase.